We begin with the raw amino-acid sequence, 196 residues long: Peptide deformylase (196 aa).

C123 and H166 together coordinate Fe cation. E167 is a catalytic residue. H170 contacts Fe cation.

The protein belongs to the polypeptide deformylase family. Fe(2+) is required as a cofactor.

The enzyme catalyses N-terminal N-formyl-L-methionyl-[peptide] + H2O = N-terminal L-methionyl-[peptide] + formate. Functionally, removes the formyl group from the N-terminal Met of newly synthesized proteins. Requires at least a dipeptide for an efficient rate of reaction. N-terminal L-methionine is a prerequisite for activity but the enzyme has broad specificity at other positions. This Lactococcus lactis subsp. lactis (strain IL1403) (Streptococcus lactis) protein is Peptide deformylase.